The chain runs to 226 residues: Choline transport system permease protein OpuBD (226 aa).

The 181-residue stretch at 22 to 202 folds into the ABC transmembrane type-1 domain; that stretch reads FGRHFLMSAY…VMAVGADLLM (181 aa). 5 helical membrane-spanning segments follow: residues 27-47, 52-72, 73-93, 148-168, and 182-202; these read LMSA…GILI, RLSA…ALAM, LAVL…SLFL, ALVI…GGLG, and AIIL…DLLM.

The protein belongs to the binding-protein-dependent transport system permease family. CysTW subfamily.

It localises to the cell membrane. In terms of biological role, involved in a high affinity multicomponent binding-protein-dependent transport system for choline; probably responsible for the translocation of the substrate across the membrane. The chain is Choline transport system permease protein OpuBD (opuBD) from Bacillus subtilis (strain 168).